Consider the following 89-residue polypeptide: Omega-theraphotoxin-Ba1c (89 aa).

The first 23 residues, 1 to 23, serve as a signal peptide directing secretion; the sequence is MRSLTLAAVLACSLLLVFHTSAA. Positions 24–50 are excised as a propeptide; that stretch reads EEHEAQEGYLMNPGDTDTALATVDDER. 3 disulfide bridges follow: cysteine 54–cysteine 75, cysteine 58–cysteine 81, and cysteine 67–cysteine 86.

Belongs to the neurotoxin 12 (Hwtx-2) family. 06 (TXP1) subfamily. As to expression, expressed by the venom gland.

The protein resides in the secreted. Functionally, inhibits voltage-gated calcium channels (Cav) in rat cerebellar granule cells. Has insecticidal activity. This Brachypelma albiceps (Mexican golden redrump tarantula) protein is Omega-theraphotoxin-Ba1c.